A 166-amino-acid chain; its full sequence is Small ribosomal subunit protein uS5 (166 aa).

The S5 DRBM domain occupies 12–75; it reads YIEKLVQVNR…EAARRNMIQV (64 aa).

The protein belongs to the universal ribosomal protein uS5 family. As to quaternary structure, part of the 30S ribosomal subunit. Contacts proteins S4 and S8.

In terms of biological role, with S4 and S12 plays an important role in translational accuracy. Functionally, located at the back of the 30S subunit body where it stabilizes the conformation of the head with respect to the body. The protein is Small ribosomal subunit protein uS5 of Pseudomonas entomophila (strain L48).